Reading from the N-terminus, the 152-residue chain is 3-hydroxyacyl-[acyl-carrier-protein] dehydratase FabZ (152 aa).

The active site involves His-54.

Belongs to the thioester dehydratase family. FabZ subfamily.

The protein resides in the cytoplasm. The enzyme catalyses a (3R)-hydroxyacyl-[ACP] = a (2E)-enoyl-[ACP] + H2O. In terms of biological role, involved in unsaturated fatty acids biosynthesis. Catalyzes the dehydration of short chain beta-hydroxyacyl-ACPs and long chain saturated and unsaturated beta-hydroxyacyl-ACPs. This is 3-hydroxyacyl-[acyl-carrier-protein] dehydratase FabZ from Shewanella woodyi (strain ATCC 51908 / MS32).